A 1198-amino-acid polypeptide reads, in one-letter code: Phosphatidylinositol-3,5-bisphosphate 3-phosphatase MTMR3 (1198 aa).

Serine 8 carries the phosphoserine modification. Residues 155–576 (EHVTSRFKNE…RNLMLWSAVY (422 aa)) enclose the Myotubularin phosphatase domain. Polar residues predominate over residues 265-280 (SRSSGSKLSTRNTSRD). The segment at 265 to 285 (SRSSGSKLSTRNTSRDFPNGG) is disordered. Asparagine 326, asparagine 351, and isoleucine 352 together coordinate a 1,2-diacyl-sn-glycero-3-phospho-(1D-myo-inositol-3,5-bisphosphate). 3 residues coordinate a 1,2-diacyl-sn-glycero-3-phospho-(1D-myo-inositol-3-phosphate): asparagine 326, asparagine 351, and isoleucine 352. Catalysis depends on cysteine 413, which acts as the Phosphocysteine intermediate. Residues serine 414, aspartate 415, glycine 416, tryptophan 417, aspartate 418, arginine 419, lysine 455, and arginine 459 each coordinate a 1,2-diacyl-sn-glycero-3-phospho-(1D-myo-inositol-3,5-bisphosphate). Residues serine 414, aspartate 415, glycine 416, tryptophan 417, aspartate 418, and arginine 419 each contribute to the a 1,2-diacyl-sn-glycero-3-phospho-(1D-myo-inositol-3-phosphate) site. Arginine 459 contributes to the a 1,2-diacyl-sn-glycero-3-phospho-(1D-myo-inositol-3-phosphate) binding site. Residues 590-612 (CAPYPAPGTSPDDPPLSRLPKTR) are disordered. Over residues 593–603 (YPAPGTSPDDP) the composition is skewed to pro residues. Serine 613, serine 633, serine 647, and serine 651 each carry phosphoserine. Disordered regions lie at residues 650–669 (LSSL…LGKP), 716–735 (EGKE…PEAS), and 855–891 (KSVS…SLVE). Basic and acidic residues predominate over residues 716–732 (EGKEDPLLEKESRRKTP). Threonine 731 is modified (phosphothreonine). Phosphoserine is present on residues serine 906 and serine 909. Disordered regions lie at residues 933–974 (ETEN…SRQL) and 993–1019 (WLHS…DDDG). Residues 999–1010 (GRPSATSSPDQP) are compositionally biased toward polar residues. Residues 1029–1062 (QRLRQIESGHQQEVETLKKQVQELKSRLESQYLT) are a coiled coil. At serine 1064 the chain carries Phosphoserine. The FYVE-type zinc finger occupies 1119–1179 (DHLAAHCYAC…VCKSCYSSLH (61 aa)). 8 residues coordinate Zn(2+): cysteine 1125, cysteine 1128, cysteine 1141, cysteine 1144, cysteine 1149, cysteine 1152, cysteine 1171, and cysteine 1174.

The protein belongs to the protein-tyrosine phosphatase family. Non-receptor class myotubularin subfamily. As to quaternary structure, forms heterodimers with MTMR4 that recruit both CEP55 and PLK1; occurs during early mitosis, regulates the phosphorylation of CEP55 by PLK1 and its recruitment to the midbody where it mediates cell abscission. In terms of processing, phosphorylated by CDK1 during mitosis.

The protein localises to the cytoplasm. The protein resides in the cytosol. It localises to the membrane. It carries out the reaction a 1,2-diacyl-sn-glycero-3-phospho-(1D-myo-inositol-3,5-bisphosphate) + H2O = a 1,2-diacyl-sn-glycero-3-phospho-(1D-myo-inositol-5-phosphate) + phosphate. The catalysed reaction is a 1,2-diacyl-sn-glycero-3-phospho-(1D-myo-inositol-3-phosphate) + H2O = a 1,2-diacyl-sn-glycero-3-phospho-(1D-myo-inositol) + phosphate. It catalyses the reaction 1,2-dihexadecanoyl-sn-glycero-3-phospho-(1D-myo-inositol-3-phosphate) + H2O = 1,2-dihexadecanoyl-sn-glycero-3-phospho-(1D-myo-inositol) + phosphate. The enzyme catalyses 1,2-dioctanoyl-sn-glycero-3-phospho-(1-D-myo-inositol-3-phosphate) + H2O = 1,2-dioctanoyl-sn-glycero-3-phospho-(1D-myo-inositol) + phosphate. It carries out the reaction 1,2-dihexadecanoyl-sn-glycero-3-phospho-(1D-myo-inositol-3,5-phosphate) + H2O = 1,2-dihexadecanoyl-sn-glycero-3-phospho-(1D-myo-inositol-5-phosphate) + phosphate. In terms of biological role, lipid phosphatase that specifically dephosphorylates the D-3 position of phosphatidylinositol 3-phosphate and phosphatidylinositol 3,5-bisphosphate, generating phosphatidylinositol and phosphatidylinositol 5-phosphate. Decreases the levels of phosphatidylinositol 3-phosphate, a phospholipid found in cell membranes where it acts as key regulator of both cell signaling and intracellular membrane traffic. Could also have a molecular sequestering/adapter activity and regulate biological processes independently of its phosphatase activity. It includes the regulation of midbody abscission during mitotic cytokinesis. This is Phosphatidylinositol-3,5-bisphosphate 3-phosphatase MTMR3 from Homo sapiens (Human).